Here is a 244-residue protein sequence, read N- to C-terminus: Uridylate kinase (244 aa).

Position 18-21 (18-21) interacts with ATP; sequence KVSG. Gly60 lines the UMP pocket. ATP-binding residues include Gly61 and Arg65. UMP is bound by residues Asp80 and 141-148; that span reads TGNPFCTT. The ATP site is built by Thr168, Gln169, Tyr174, and Asp177.

The protein belongs to the UMP kinase family. As to quaternary structure, homohexamer.

It localises to the cytoplasm. It catalyses the reaction UMP + ATP = UDP + ADP. It functions in the pathway pyrimidine metabolism; CTP biosynthesis via de novo pathway; UDP from UMP (UMPK route): step 1/1. With respect to regulation, inhibited by UTP. Functionally, catalyzes the reversible phosphorylation of UMP to UDP. The polypeptide is Uridylate kinase (Rickettsia typhi (strain ATCC VR-144 / Wilmington)).